The primary structure comprises 179 residues: Large ribosomal subunit protein uL6 (179 aa).

The protein belongs to the universal ribosomal protein uL6 family. Part of the 50S ribosomal subunit.

In terms of biological role, this protein binds to the 23S rRNA, and is important in its secondary structure. It is located near the subunit interface in the base of the L7/L12 stalk, and near the tRNA binding site of the peptidyltransferase center. The chain is Large ribosomal subunit protein uL6 from Syntrophus aciditrophicus (strain SB).